We begin with the raw amino-acid sequence, 337 residues long: MTNLQTFELPTEVIGSAADISLGRALIQAWQKDGILQIKTDSEQNRKTQEAMAASKQFCKEPLTFKSSCVSDLTYSGYVASGEEVTAGKPDFPEIFTVCKDLPVSDQRVKAGWPCHGPVPWPNNTYQKSMKAFMGELGLAGERLLKLTALGFELPINTFTDLTRNGWHHMRVLRFPPQTSTMSSGIGAHTDYGLLVIAAQDDVGGLYIRPPVEGEKRNRNWLPGESSAGMFEHDDPWTYVTPVQNVWTVFPGDILQFMTCGQLLSTPHKVRLNTRERFACAYFHEPNFEACAYQVFEPSGNERIHYGEHFTSMFMRCYPDRITTKRIHKDNRLAHFK.

The Fe2OG dioxygenase domain maps to 166-286 (GWHHMRVLRF…RFACAYFHEP (121 aa)). Residues H189 and H268 each coordinate Fe cation.

This sequence belongs to the iron/ascorbate-dependent oxidoreductase family. In terms of assembly, monomer. Fe(2+) serves as cofactor.

The enzyme catalyses 2-oxoglutarate + O2 + 2 H(+) = ethene + 3 CO2 + H2O. It carries out the reaction L-arginine + 2-oxoglutarate + O2 = guanidine + L-glutamate 5-semialdehyde + succinate + CO2. The protein operates within alkene biosynthesis; ethylene biosynthesis via 2-oxoglutarate. Functionally, simultaneously catalyzes two reactions, namely formation of ethylene and of succinate from 2-oxoglutarate. In Pseudomonas syringae pv. pisi, this protein is 2-oxoglutarate-dependent ethylene/succinate-forming enzyme (efe).